We begin with the raw amino-acid sequence, 878 residues long: Alanine--tRNA ligase (878 aa).

Zn(2+) contacts are provided by His-570, His-574, Cys-672, and His-676. A disordered region spans residues 844-864 (GGKGGGGRPDMAQAGGPDASA). Over residues 855–864 (AQAGGPDASA) the composition is skewed to low complexity.

It belongs to the class-II aminoacyl-tRNA synthetase family. It depends on Zn(2+) as a cofactor.

The protein resides in the cytoplasm. It catalyses the reaction tRNA(Ala) + L-alanine + ATP = L-alanyl-tRNA(Ala) + AMP + diphosphate. In terms of biological role, catalyzes the attachment of alanine to tRNA(Ala) in a two-step reaction: alanine is first activated by ATP to form Ala-AMP and then transferred to the acceptor end of tRNA(Ala). Also edits incorrectly charged Ser-tRNA(Ala) and Gly-tRNA(Ala) via its editing domain. The polypeptide is Alanine--tRNA ligase (Paramagnetospirillum magneticum (strain ATCC 700264 / AMB-1) (Magnetospirillum magneticum)).